The following is a 537-amino-acid chain: Cytochrome P450 monooxygenase alt2 (537 aa).

A helical membrane pass occupies residues 4-24 (HLLILAAVVLLIIHIVNNFLI). Heme is bound at residue Cys474.

It belongs to the cytochrome P450 family. It depends on heme as a cofactor.

It is found in the membrane. It functions in the pathway secondary metabolite biosynthesis. Cytochrome P450 monooxygenase; part of the gene cluster that mediates the biosynthesis of alternapyrone derivatives. Alternapyrone is a decaketide with octa-methylation from methionine on every C2 unit except the third unit. All the domains in the polyketide synthase alt5 are apparently involved in alternapyrone synthesis, that is, the 8 CMeT, 7 KR, 7 DH, and 4 ER reactions in the 9 KS-mediated condensation steps required for alternapyrone synthesis. the alternapyrone produced by alt5 might be intensively modified by cytochrome P450 monooxygenases alt1, alt2 and alt3 and FAD-dependent oxidoreductase alt4 present in the alt gene cluster. The sequence is that of Cytochrome P450 monooxygenase alt2 from Alternaria solani.